We begin with the raw amino-acid sequence, 183 residues long: Small ribosomal subunit protein uS5 (183 aa).

An S5 DRBM domain is found at 11–71 (FLERVVGINR…EEAKKSFFRV (61 aa)).

The protein belongs to the universal ribosomal protein uS5 family. In terms of assembly, part of the 30S ribosomal subunit. Contacts proteins S4 and S8.

In terms of biological role, with S4 and S12 plays an important role in translational accuracy. Located at the back of the 30S subunit body where it stabilizes the conformation of the head with respect to the body. The sequence is that of Small ribosomal subunit protein uS5 from Micrococcus luteus (Micrococcus lysodeikticus).